The sequence spans 469 residues: DNA-binding transcriptional regulator NtrC (469 aa).

In terms of domain architecture, Response regulatory spans 5 to 119 (IVWVVDDDSS…EAVALVERAI (115 aa)). At D54 the chain carries 4-aspartylphosphate. The region spanning 140–369 (IIGEAPAMQD…LENTCRWLTV (230 aa)) is the Sigma-54 factor interaction domain. ATP contacts are provided by residues 168–175 (GESGTGKE) and 231–240 (ADGGTLFLDE). A DNA-binding region (H-T-H motif) is located at residues 445 to 464 (KQEAARLLGWGRNTLTRKLK).

Phosphorylated and dephosphorylated by NtrB.

The protein resides in the cytoplasm. Its function is as follows. Member of the two-component regulatory system NtrB/NtrC, which controls expression of the nitrogen-regulated (ntr) genes in response to nitrogen limitation. Phosphorylated NtrC binds directly to DNA and stimulates the formation of open promoter-sigma54-RNA polymerase complexes. The sequence is that of DNA-binding transcriptional regulator NtrC (glnG) from Escherichia coli O157:H7.